Reading from the N-terminus, the 186-residue chain is NADH-quinone oxidoreductase subunit B (186 aa).

[4Fe-4S] cluster contacts are provided by cysteine 44, cysteine 45, cysteine 110, and cysteine 139.

This sequence belongs to the complex I 20 kDa subunit family. NDH-1 is composed of 14 different subunits. Subunits NuoB, C, D, E, F, and G constitute the peripheral sector of the complex. The cofactor is [4Fe-4S] cluster.

It localises to the cell inner membrane. The catalysed reaction is a quinone + NADH + 5 H(+)(in) = a quinol + NAD(+) + 4 H(+)(out). NDH-1 shuttles electrons from NADH, via FMN and iron-sulfur (Fe-S) centers, to quinones in the respiratory chain. The immediate electron acceptor for the enzyme in this species is believed to be ubiquinone. Couples the redox reaction to proton translocation (for every two electrons transferred, four hydrogen ions are translocated across the cytoplasmic membrane), and thus conserves the redox energy in a proton gradient. This chain is NADH-quinone oxidoreductase subunit B, found in Leptospira biflexa serovar Patoc (strain Patoc 1 / Ames).